The following is a 198-amino-acid chain: LIM domain-containing protein D (198 aa).

Positions 5 to 65 (GKCTRCQKTV…ANHYPVGGLS (61 aa)) constitute an LIM zinc-binding domain.

The protein localises to the cell projection. It localises to the pseudopodium. It is found in the cytoplasm. Its subcellular location is the cell cortex. The protein resides in the cytoskeleton. In terms of biological role, binds to F-actin and may modulate the chemotactic response during early development and contribute to the maintenance of the strength of the actin cytoskeleton. In Dictyostelium discoideum (Social amoeba), this protein is LIM domain-containing protein D (limD).